A 218-amino-acid polypeptide reads, in one-letter code: Probable WRKY transcription factor 12 (218 aa).

The span at 49-63 (SSLSSPSFPIHNSSS) shows a compositional bias: low complexity. Disordered stretches follow at residues 49–120 (SSLS…DMKN) and 199–218 (HNHIPSDDSTSPDHDCLSSF). The span at 64 to 77 (TTTTHAPLGFSNNL) shows a compositional bias: polar residues. The span at 105 to 116 (SNSWWRSNSGSG) shows a compositional bias: low complexity. The WRKY DNA-binding region spans 139–204 (SDVDVLDDGY…YEGRHNHIPS (66 aa)).

This sequence belongs to the WRKY group II-c family.

It is found in the nucleus. In terms of biological role, transcription factor. Interacts specifically with the W box (5'-(T)TGAC[CT]-3'), a frequently occurring elicitor-responsive cis-acting element. This is Probable WRKY transcription factor 12 (WRKY12) from Arabidopsis thaliana (Mouse-ear cress).